The primary structure comprises 304 residues: MDAFIATFTSPGPELFQLGPFALRWYGLLIAIAVLIGLNLSSSLARKRGLEQGLISDLLPILVLTAVVGARIYYVAFEWRNYSGDNFWSSINIFGLAIPIPSAMEIWGGGIAIHGALLSGTLAVLIFCRWRRQAFWDVLDVLVPSIALGQAIGRWGNFFNNEAFGVPIKGDLAWKLFIPFVNRPLNYANNEFFHPTFLYESIWNLLVFTLLIVLFQRSNKGLLKLPAGALSCIYLITYSLGRVWIEALRTDPLCLGALPPSCEGGLRIAQLMSLAMMAVGGFGLWWLYGRKRKLPDPGRPKSFA.

4 helical membrane passes run 18–38, 58–78, 106–126, and 133–153; these read LGPF…LIGL, LLPI…VAFE, IWGG…AVLI, and QAFW…QAIG. Arg-154 provides a ligand contact to a 1,2-diacyl-sn-glycero-3-phospho-(1'-sn-glycerol). Helical transmembrane passes span 195-215, 221-241, and 268-288; these read PTFL…IVLF, GLLK…YSLG, and IAQL…WWLY.

Belongs to the Lgt family.

It localises to the cell inner membrane. It carries out the reaction L-cysteinyl-[prolipoprotein] + a 1,2-diacyl-sn-glycero-3-phospho-(1'-sn-glycerol) = an S-1,2-diacyl-sn-glyceryl-L-cysteinyl-[prolipoprotein] + sn-glycerol 1-phosphate + H(+). It participates in protein modification; lipoprotein biosynthesis (diacylglyceryl transfer). In terms of biological role, catalyzes the transfer of the diacylglyceryl group from phosphatidylglycerol to the sulfhydryl group of the N-terminal cysteine of a prolipoprotein, the first step in the formation of mature lipoproteins. This chain is Phosphatidylglycerol--prolipoprotein diacylglyceryl transferase, found in Prochlorococcus marinus (strain MIT 9303).